The sequence spans 78 residues: Acyl carrier protein (78 aa).

The region spanning 2–77 (STIEERVKKI…AAIDYVTSHQ (76 aa)) is the Carrier domain. Ser37 carries the O-(pantetheine 4'-phosphoryl)serine modification.

This sequence belongs to the acyl carrier protein (ACP) family. In terms of processing, 4'-phosphopantetheine is transferred from CoA to a specific serine of apo-ACP by AcpS. This modification is essential for activity because fatty acids are bound in thioester linkage to the sulfhydryl of the prosthetic group.

The protein localises to the cytoplasm. It functions in the pathway lipid metabolism; fatty acid biosynthesis. Functionally, carrier of the growing fatty acid chain in fatty acid biosynthesis. This Pseudomonas fluorescens (strain SBW25) protein is Acyl carrier protein.